The sequence spans 604 residues: Protein CBFA2T1 (604 aa).

The tract at residues 32–114 (TEKHSTMPDS…SSSSLANQQL (83 aa)) is disordered. Phosphoserine is present on Ser-41. Positions 63–86 (QGAPRTSSFTPTTLTNGTSHSPTA) are enriched in polar residues. Low complexity predominate over residues 95-114 (NGFSNGPSSSSSSSLANQQL). The 96-residue stretch at 120–215 (ARQLSKLKRF…NPAQYLAQHE (96 aa)) folds into the TAFH domain. Positions 230 to 298 (SELLLDVNEN…LPHPTPPPPQ (69 aa)) are disordered. Residues 238-264 (ENGKRRTPDRTKENGFDREPLHSEHPS) show a composition bias toward basic and acidic residues. The segment covering 271–285 (SPGQRYSPNNGLSYQ) has biased composition (polar residues). Residues 289–298 (LPHPTPPPPQ) show a composition bias toward pro residues. Positions 337-383 (QEEMIDHRLTDREWAEEWKHLDHLLNCIMDMVEKTRRSLTVLRRCQE) are important for oligomerization. Positions 337 to 383 (QEEMIDHRLTDREWAEEWKHLDHLLNCIMDMVEKTRRSLTVLRRCQE) are nervy homology region 2 (NHR2). Positions 401 to 423 (DLKKGGGSSSSHSRQQSPVNPDP) are disordered. The residue at position 417 (Ser-417) is a Phosphoserine. Positions 443–492 (EEIWKKAEEAVNEVKRQAMTELQKAVSEAERKAHDMITTERAKMERTVAE) are nervy homology region 3 (NHR3). Cys-515, Cys-518, Cys-526, Cys-529, Cys-535, Cys-539, His-547, and Cys-551 together coordinate Zn(2+). The MYND-type zinc-finger motif lies at 515-551 (CWNCGRKASETCSGCNTARYCGSFCQHKDWEKHHHIC). Polar residues predominate over residues 557–576 (AQQQGDTPAVSSSVTPNSGA). Residues 557–604 (AQQQGDTPAVSSSVTPNSGAGSPMDTPPAATPRSTTPGTPSTIETTPR) are disordered. The span at 587-604 (TPRSTTPGTPSTIETTPR) shows a compositional bias: low complexity.

Belongs to the CBFA2T family. As to quaternary structure, homooligomer. Homotetramerization is mediated by nervy homology region 2 (NRH2). Can interact with CBFA2T2 and CBFA2T3; heterotetramerization between members of the CBFA2T family is proposed. Interacts with TCF12, SIN3A, HDAC1, HDAC2, HDAC3, NCOR1, NCOR2. Interacts with ATN1 (via its N-terminus); the interaction enhances the transcriptional repression. Interacts (via its N-terminus) with ZBTB16; the interaction increases the transcription repression activity of ZBTB16. AML1-MTG8/ETO fusion protein interacts with CBFB. AML1-MTG8/ETO is part of a stable transcription factor complex AETFC in leukemic cells; AETFC formation seems to be involved in recruitment of EP300. AML1-MTG8/ETO nervy homology region 2-mediated oligomerization is proposed to be homotypic, required for AML1-MTG8/ETO-mediated transformation of primary hematopoietic cells and is required for AML1-MTG8/ETO interaction with TCF12. As to expression, most abundantly expressed in brain. Lower levels in lung, heart, testis and ovary.

It is found in the nucleus. In terms of biological role, transcriptional corepressor which facilitates transcriptional repression via its association with DNA-binding transcription factors and recruitment of other corepressors and histone-modifying enzymes. Can repress the expression of MMP7 in a ZBTB33-dependent manner. Can repress transactivation mediated by TCF12. Acts as a negative regulator of adipogenesis. The AML1-MTG8/ETO fusion protein frequently found in leukemic cells is involved in leukemogenesis and contributes to hematopoietic stem/progenitor cell self-renewal. In Homo sapiens (Human), this protein is Protein CBFA2T1 (RUNX1T1).